A 314-amino-acid polypeptide reads, in one-letter code: Homeobox protein knotted-1-like 3 (314 aa).

One can recognise an ELK domain in the interval 218–238 (ELKIELKQGFKSRIEDVREEI). The segment at residues 239–302 (LRKRRAGKLP…NQRKRNWHNN (64 aa)) is a DNA-binding region (homeobox; TALE-type).

Belongs to the TALE/KNOX homeobox family. In terms of tissue distribution, isoform 1 is expressed in roots and flowers, and at lower levels in leaf blades and leaf sheaths. Isoform 2 is expressed in roots and flowers.

Its subcellular location is the nucleus. The chain is Homeobox protein knotted-1-like 3 (HOS66) from Oryza sativa subsp. japonica (Rice).